The sequence spans 208 residues: MARYIGPSCKLARREGADLSLKSPSRALDSKCKLEQRPGQHGAVRKSKLSDYASQLREKQKVKRIYGVLERQFRNYYKNASTKKGNTGENLLQLLETRLDNVIYRMGFAVTRPAARQLVSHRRVLVNGKLVNLPSYHVKPGDVVALSQRAQKYLCVQESLTIKDQHGSAFSWVEVDSEKFSGVFKAFPDRADLPSDINEALIVELYSK.

An S4 RNA-binding domain is found at 97 to 158 (TRLDNVIYRM…RAQKYLCVQE (62 aa)).

The protein belongs to the universal ribosomal protein uS4 family. In terms of assembly, part of the 30S ribosomal subunit. Contacts protein S5. The interaction surface between S4 and S5 is involved in control of translational fidelity.

One of the primary rRNA binding proteins, it binds directly to 16S rRNA where it nucleates assembly of the body of the 30S subunit. Functionally, with S5 and S12 plays an important role in translational accuracy. In Xylella fastidiosa (strain 9a5c), this protein is Small ribosomal subunit protein uS4.